Consider the following 168-residue polypeptide: Phosphopantetheine adenylyltransferase (168 aa).

T13 provides a ligand contact to substrate. ATP is bound by residues 13–14 (TF) and H21. Substrate-binding residues include K45, L78, and R92. Residues 93–95 (GLR), E103, and 128–134 (TQFISSS) contribute to the ATP site.

The protein belongs to the bacterial CoaD family. In terms of assembly, homohexamer. It depends on Mg(2+) as a cofactor.

The protein localises to the cytoplasm. It catalyses the reaction (R)-4'-phosphopantetheine + ATP + H(+) = 3'-dephospho-CoA + diphosphate. It functions in the pathway cofactor biosynthesis; coenzyme A biosynthesis; CoA from (R)-pantothenate: step 4/5. Its function is as follows. Reversibly transfers an adenylyl group from ATP to 4'-phosphopantetheine, yielding dephospho-CoA (dPCoA) and pyrophosphate. The sequence is that of Phosphopantetheine adenylyltransferase from Wolbachia pipientis wMel.